A 415-amino-acid polypeptide reads, in one-letter code: MAIQAQKGTKDMLPNDAYKWHYIEEKLRKISAEYGIREIRTPMFEATELFKRGVGETTDVVQKEMYTFEDKGGRSITLKPEGTAPAVRAFIENSLYADAQPTKMFYFTPCFRYEKMQKGRLREFHQYGIEVFGSQEASIDAEILSLVMRALTEDFGIKGLSLNINSLGCPKCRAKFNEALKQYLKENYDNLCETCKTRFEKNPMRIIDCKEKRCKEIVKEAPSILDYICEECSDHFSKLKAYLDVMGIEYNIDPQIVRGLDYYSKTVFEVIKDGLTVCGGGRYDYLVEEVDGPKTPAMGFGLGLERLLLILDEEGIEIPEPVRCEVYIGSMGDNAKLEAMKLAFNLRKAGIKAEIDHLGKSVKAQMKYANKIGAKYTFVIGDSEIEENKIKIKRMSDGEQFEVSLDINEIVNIVK.

The protein belongs to the class-II aminoacyl-tRNA synthetase family. In terms of assembly, homodimer.

It is found in the cytoplasm. The catalysed reaction is tRNA(His) + L-histidine + ATP = L-histidyl-tRNA(His) + AMP + diphosphate + H(+). In Clostridium perfringens (strain ATCC 13124 / DSM 756 / JCM 1290 / NCIMB 6125 / NCTC 8237 / Type A), this protein is Histidine--tRNA ligase.